The following is a 400-amino-acid chain: Endophilin-B2 (400 aa).

N-acetylmethionine is present on M1. The interval 1-27 (MDFNMKKLASDAGIFFTRAVQFTEEKF) is membrane-binding amphipathic helix. Phosphoserine is present on S10. Residues 24 to 287 (EEKFGQAEKT…LGSSQGAIFP (264 aa)) form the BAR domain. A coiled-coil region spans residues 205–234 (SASALWNDEVDKAEQELRVAQTEFDRQAEV). Residues 340–400 (SGTRKARVLY…VPVTYLELLS (61 aa)) enclose the SH3 domain. At S400 the chain carries Phosphoserine.

It belongs to the endophilin family. As to quaternary structure, homodimer, and heterodimer with SH3GLB1.

Its subcellular location is the cytoplasm. This Mus musculus (Mouse) protein is Endophilin-B2 (Sh3glb2).